A 312-amino-acid polypeptide reads, in one-letter code: Pyridoxal kinase (312 aa).

Met1 is modified (N-acetylmethionine). Pyridoxal is bound by residues Ser12 and Thr47. Position 47 (Thr47) interacts with pyridoxal 5'-phosphate. Ser59 carries the phosphoserine modification. Asp113 contributes to the ATP binding site. Residue Asp113 coordinates Na(+). Mg(2+) is bound at residue Asp118. Thr148 is a Na(+) binding site. 150–153 (NQFE) contacts ATP. Ser164 carries the post-translational modification Phosphoserine. Residue Thr186 participates in Na(+) binding. Position 186–187 (186–187 (TS)) interacts with ATP. Ser213 carries the phosphoserine modification. Residues 226–228 (VEA) and Thr233 each bind ATP. 234–235 (GD) lines the pyridoxal 5'-phosphate pocket. The active-site Proton acceptor is the Asp235. A Phosphoserine modification is found at Ser285.

This sequence belongs to the pyridoxine kinase family. Homodimer. Zn(2+) is required as a cofactor. It depends on Mg(2+) as a cofactor.

It is found in the cytoplasm. Its subcellular location is the cytosol. The catalysed reaction is pyridoxal + ATP = pyridoxal 5'-phosphate + ADP + H(+). The enzyme catalyses pyridoxamine + ATP = pyridoxamine 5'-phosphate + ADP + H(+). It carries out the reaction pyridoxine + ATP = pyridoxine 5'-phosphate + ADP + H(+). Its pathway is cofactor metabolism; pyridoxal 5'-phosphate salvage; pyridoxal 5'-phosphate from pyridoxal: step 1/1. It participates in cofactor metabolism; pyridoxal 5'-phosphate salvage; pyridoxine 5'-phosphate from pyridoxine: step 1/1. The protein operates within cofactor metabolism; pyridoxal 5'-phosphate salvage; pyridoxamine 5'-phosphate from pyridoxamine: step 1/1. Activity is increased in the presence of K(+)or Na(+). Its function is as follows. Catalyzes the phosphorylation of the dietary vitamin B6 vitamers pyridoxal (PL), pyridoxine (PN) and pyridoxamine (PM) to form pyridoxal 5'-phosphate (PLP), pyridoxine 5'-phosphate (PNP) and pyridoxamine 5'-phosphate (PMP), respectively. PLP is the active form of vitamin B6, and acts as a cofactor for over 140 different enzymatic reactions. The polypeptide is Pyridoxal kinase (Mus musculus (Mouse)).